The sequence spans 1083 residues: Error-prone DNA polymerase (1083 aa).

The protein belongs to the DNA polymerase type-C family. DnaE2 subfamily.

The protein localises to the cytoplasm. The catalysed reaction is DNA(n) + a 2'-deoxyribonucleoside 5'-triphosphate = DNA(n+1) + diphosphate. In terms of biological role, DNA polymerase involved in damage-induced mutagenesis and translesion synthesis (TLS). It is not the major replicative DNA polymerase. In Xanthomonas oryzae pv. oryzae (strain PXO99A), this protein is Error-prone DNA polymerase.